Reading from the N-terminus, the 237-residue chain is 1-(5-phosphoribosyl)-5-[(5-phosphoribosylamino)methylideneamino] imidazole-4-carboxamide isomerase (237 aa).

The active-site Proton acceptor is the D8. D129 functions as the Proton donor in the catalytic mechanism.

It belongs to the HisA/HisF family.

The protein resides in the cytoplasm. It catalyses the reaction 1-(5-phospho-beta-D-ribosyl)-5-[(5-phospho-beta-D-ribosylamino)methylideneamino]imidazole-4-carboxamide = 5-[(5-phospho-1-deoxy-D-ribulos-1-ylimino)methylamino]-1-(5-phospho-beta-D-ribosyl)imidazole-4-carboxamide. The protein operates within amino-acid biosynthesis; L-histidine biosynthesis; L-histidine from 5-phospho-alpha-D-ribose 1-diphosphate: step 4/9. This chain is 1-(5-phosphoribosyl)-5-[(5-phosphoribosylamino)methylideneamino] imidazole-4-carboxamide isomerase, found in Clostridium botulinum (strain Alaska E43 / Type E3).